Here is a 518-residue protein sequence, read N- to C-terminus: DNA-binding protein D-ETS-4 (518 aa).

Disordered regions lie at residues 74-113 (SQPI…QSSP) and 152-172 (LPPS…SCGE). Polar residues predominate over residues 84-94 (TAPYTNPSSHQ). The segment covering 102-113 (PHSAYPSPQSSP) has biased composition (low complexity). Residues 158–171 (ESNCETPSPRSSCG) are compositionally biased toward polar residues. Positions 258–344 (HAKREADAIC…AQLEIWKMAY (87 aa)) constitute a PNT domain. The tract at residues 393–426 (APLNGSTTSPPATNASNGGTATVKRPNGGRTGGG) is disordered. The segment covering 396–412 (NGSTTSPPATNASNGGT) has biased composition (polar residues). Positions 430–513 (IHLWQFLKEL…RSQRLVYQFC (84 aa)) form a DNA-binding region, ETS.

The protein belongs to the ETS family. As to expression, transient high expression in pole cells during embryonic stages 8-11.

The protein resides in the nucleus. Functionally, may have a role in germline development. This is DNA-binding protein D-ETS-4 (Ets98B) from Drosophila melanogaster (Fruit fly).